Here is a 433-residue protein sequence, read N- to C-terminus: UDP-N-acetylglucosamine 1-carboxyvinyltransferase (433 aa).

Residue 34–35 (KN) coordinates phosphoenolpyruvate. Arg104 provides a ligand contact to UDP-N-acetyl-alpha-D-glucosamine. The active-site Proton donor is Cys128. Cys128 bears the 2-(S-cysteinyl)pyruvic acid O-phosphothioketal mark. Residues Asp320 and Ile342 each coordinate UDP-N-acetyl-alpha-D-glucosamine.

This sequence belongs to the EPSP synthase family. MurA subfamily.

The protein resides in the cytoplasm. The enzyme catalyses phosphoenolpyruvate + UDP-N-acetyl-alpha-D-glucosamine = UDP-N-acetyl-3-O-(1-carboxyvinyl)-alpha-D-glucosamine + phosphate. Its pathway is cell wall biogenesis; peptidoglycan biosynthesis. Cell wall formation. Adds enolpyruvyl to UDP-N-acetylglucosamine. The polypeptide is UDP-N-acetylglucosamine 1-carboxyvinyltransferase (Parasynechococcus marenigrum (strain WH8102)).